A 338-amino-acid chain; its full sequence is S-adenosylmethionine:tRNA ribosyltransferase-isomerase (338 aa).

Belongs to the QueA family. Monomer.

It localises to the cytoplasm. The enzyme catalyses 7-aminomethyl-7-carbaguanosine(34) in tRNA + S-adenosyl-L-methionine = epoxyqueuosine(34) in tRNA + adenine + L-methionine + 2 H(+). The protein operates within tRNA modification; tRNA-queuosine biosynthesis. In terms of biological role, transfers and isomerizes the ribose moiety from AdoMet to the 7-aminomethyl group of 7-deazaguanine (preQ1-tRNA) to give epoxyqueuosine (oQ-tRNA). This chain is S-adenosylmethionine:tRNA ribosyltransferase-isomerase, found in Francisella tularensis subsp. holarctica (strain FTNF002-00 / FTA).